Here is a 47-residue protein sequence, read N- to C-terminus: Delta-actitoxin-Aspp1b (47 aa).

3 disulfide bridges follow: C4–C44, C6–C34, and C27–C45.

This sequence belongs to the sea anemone sodium channel inhibitory toxin family. Type I subfamily.

It localises to the secreted. The protein localises to the nematocyst. Functionally, binds specifically to voltage-gated sodium channels (Nav), thereby delaying their inactivation during signal transduction. Has a longer mammalian heart stimulation effect than Hk2a, Hk8a and Hk16a. The sequence is that of Delta-actitoxin-Aspp1b from Anthopleura sp. (strain 'Zhanjiang') (Sea anemone).